An 842-amino-acid chain; its full sequence is Elongation factor 2 (842 aa).

In terms of domain architecture, tr-type G spans 17 to 253 (TNVRNMSVIA…LWGDSYFNPK (237 aa)). GTP is bound by residues 26 to 33 (AHVDHGKS), 158 to 161 (NKVD), and 213 to 215 (SGL). Position 699 is a diphthamide (H699).

Belongs to the TRAFAC class translation factor GTPase superfamily. Classic translation factor GTPase family. EF-G/EF-2 subfamily.

Its subcellular location is the cytoplasm. The enzyme catalyses GTP + H2O = GDP + phosphate + H(+). In terms of biological role, catalyzes the GTP-dependent ribosomal translocation step during translation elongation. During this step, the ribosome changes from the pre-translocational (PRE) to the post-translocational (POST) state as the newly formed A-site-bound peptidyl-tRNA and P-site-bound deacylated tRNA move to the P and E sites, respectively. Catalyzes the coordinated movement of the two tRNA molecules, the mRNA and conformational changes in the ribosome. This Debaryomyces hansenii (strain ATCC 36239 / CBS 767 / BCRC 21394 / JCM 1990 / NBRC 0083 / IGC 2968) (Yeast) protein is Elongation factor 2 (EFT1).